Reading from the N-terminus, the 329-residue chain is Ketol-acid reductoisomerase (NADP(+)) (329 aa).

The KARI N-terminal Rossmann domain occupies 2 to 181 (MKKYYESDAD…GATRAVVLET (180 aa)). NADP(+)-binding positions include 25–28 (YGSQ), Arg-48, Ser-52, and 82–85 (DELQ). His-107 is a catalytic residue. Gly-133 contributes to the NADP(+) binding site. Positions 182 to 327 (TFREETETDL…KEVRAMMPQF (146 aa)) constitute a KARI C-terminal knotted domain. Asp-190, Glu-194, Glu-226, and Glu-230 together coordinate Mg(2+). Ser-251 is a substrate binding site.

Belongs to the ketol-acid reductoisomerase family. Requires Mg(2+) as cofactor.

It carries out the reaction (2R)-2,3-dihydroxy-3-methylbutanoate + NADP(+) = (2S)-2-acetolactate + NADPH + H(+). The catalysed reaction is (2R,3R)-2,3-dihydroxy-3-methylpentanoate + NADP(+) = (S)-2-ethyl-2-hydroxy-3-oxobutanoate + NADPH + H(+). The protein operates within amino-acid biosynthesis; L-isoleucine biosynthesis; L-isoleucine from 2-oxobutanoate: step 2/4. It participates in amino-acid biosynthesis; L-valine biosynthesis; L-valine from pyruvate: step 2/4. Involved in the biosynthesis of branched-chain amino acids (BCAA). Catalyzes an alkyl-migration followed by a ketol-acid reduction of (S)-2-acetolactate (S2AL) to yield (R)-2,3-dihydroxy-isovalerate. In the isomerase reaction, S2AL is rearranged via a Mg-dependent methyl migration to produce 3-hydroxy-3-methyl-2-ketobutyrate (HMKB). In the reductase reaction, this 2-ketoacid undergoes a metal-dependent reduction by NADPH to yield (R)-2,3-dihydroxy-isovalerate. The protein is Ketol-acid reductoisomerase (NADP(+)) of Methanoregula boonei (strain DSM 21154 / JCM 14090 / 6A8).